A 489-amino-acid polypeptide reads, in one-letter code: Rhamnulokinase (489 aa).

ATP is bound at residue 13 to 17; the sequence is ASSGR. Cys68 and Cys222 are oxidised to a cystine. Substrate is bound by residues Gly83 and 236–238; that span reads HDT. Residue Asp237 is the Proton acceptor of the active site. Thr259 contacts ATP. Substrate is bound at residue Asn296. Gln304 contributes to the ATP binding site. A disulfide bridge links Cys353 with Cys370. Gly402 contacts ATP. Cysteines 413 and 417 form a disulfide.

This sequence belongs to the rhamnulokinase family. It depends on Mg(2+) as a cofactor.

It carries out the reaction L-rhamnulose + ATP = L-rhamnulose 1-phosphate + ADP + H(+). The protein operates within carbohydrate degradation; L-rhamnose degradation; glycerone phosphate from L-rhamnose: step 2/3. Involved in the catabolism of L-rhamnose (6-deoxy-L-mannose). Catalyzes the transfer of the gamma-phosphate group from ATP to the 1-hydroxyl group of L-rhamnulose to yield L-rhamnulose 1-phosphate. The sequence is that of Rhamnulokinase from Salmonella choleraesuis (strain SC-B67).